The sequence spans 160 residues: Cytochrome b6-f complex subunit 4 (160 aa).

Helical transmembrane passes span 36-56, 95-115, and 131-151; these read LLYIFPIVILGTIACIAGLAV, LLGVLLMASVPAGLLTVPFLE, and TVFLIGTVVAIWLGIGAALPI.

The protein belongs to the cytochrome b family. PetD subfamily. The 4 large subunits of the cytochrome b6-f complex are cytochrome b6, subunit IV (17 kDa polypeptide, petD), cytochrome f and the Rieske protein, while the 4 small subunits are petG, petL, petM and petN. The complex functions as a dimer.

It is found in the plastid. It localises to the chloroplast thylakoid membrane. Component of the cytochrome b6-f complex, which mediates electron transfer between photosystem II (PSII) and photosystem I (PSI), cyclic electron flow around PSI, and state transitions. This Psilotum nudum (Whisk fern) protein is Cytochrome b6-f complex subunit 4.